The chain runs to 664 residues: MAGLSSSQIPDGEFTAVVYRLIRDSRYSEAVQLLSAELQRSPRSRAGLSLLAYCYYRLQEFELAAECYEQLSQMHPELEQYRLYQAQALYKACLYPEATRVAFLLDNPSFYSRVLRLQAAIKYSEGDLPGARSLVEQLLSGEAGEDSGGENDPDGLVNMGCLLYKEGHYEAACSKFFAALQASGYQPDVSYNLALACYSNRHYAPALKHIANIIERGIRQHPELGVGMTTEGIDVRSVGNTVVLHQTALVEAFNLKAAIEYQLRNFEAAQEALTDMPPRAEEELDPVTLHNQALMNMDAKPTEGFEKLQFLLQQNPFPPETFGNLLLLYCKYEYFDLAADVLAENAHLTYKFLTPYLYDFLDAMITCQTAPEEAFIKLDGLAGMLTEQLRRLTKQVQEARHNRDDEVVIKAVNEYDETLEKYIPVLMAQAKIYWNLENYQMVEKIFRKSVEFCNDHDVWKLNVAHVLFMQENKYKEAIGFYEPIVKKNYDNILSVSAIVLANLCVSYIMTSQNEEAEELMRKIEKEEEQLSYGDPDKKIYHLCIVNLVIGTLYCAKGNYDFGISRVIKSLEPYHKKLGTDTWYYAKRCFLSLLENMSKHTIMLRDSVIQECVQFLEHCEIFGRSIPAVIEQPLEEERMHTGKNTVTYESRQLKALIYEIIGWNM.

TPR repeat units follow at residues 11–44 (DGEF…SPRS), 45–78 (RAGL…HPEL), 153–186 (PDGL…SGYQ), 188–220 (DVSY…GIRQ), 395–423 (QVQE…EKYI), 424–456 (PVLM…CNDH), and 458–491 (VWKL…NYDN). Residues 507–534 (YIMTSQNEEAEELMRKIEKEEEQLSYGD) adopt a coiled-coil conformation. The TPR 8 repeat unit spans residues 543–576 (CIVNLVIGTLYCAKGNYDFGISRVIKSLEPYHKK).

This sequence belongs to the TTC30/dfy-1/fleer family. In terms of assembly, interacts wit the IFT B complex component IFT52.

The protein localises to the cell projection. The protein resides in the cilium. Required for polyglutamylation of axonemal tubulin. Plays a role in anterograde intraflagellar transport (IFT), the process by which cilia precursors are transported from the base of the cilium to the site of their incorporation at the tip. The protein is Intraflagellar transport protein 70A2 (Ift70a2) of Rattus norvegicus (Rat).